A 786-amino-acid chain; its full sequence is Exo-beta-D-glucosaminidase (786 aa).

Substrate contacts are provided by residues Y53, 102 to 103 (GE), 178 to 179 (DE), E306, E347, and Y379. E179 (proton donor) is an active-site residue. The active-site Nucleophile is E347.

The protein belongs to the glycosyl hydrolase 35 family. As to quaternary structure, homodimer.

The protein resides in the cytoplasm. It catalyses the reaction beta-D-glucosaminyl-(1-&gt;4)-N-acetyl-D-glucosamine + H2O = D-glucosamine + N-acetyl-D-glucosamine. It participates in glycan degradation; chitin degradation. Its function is as follows. Exo-type enzyme that specifically cleaves the non-reducing terminal glycosidic bond of chitooligosaccharides. Catalyzes the hydrolysis of GlcN-GlcNAc to glucosamine (GlcN) and N-acetylglucosamine (GlcNAc). Involved in chitin degradation. Can also hydrolyze reduced chitobiose (GlcN2OH) and chitooligosaccharides of various chain lengths. The sequence is that of Exo-beta-D-glucosaminidase from Thermococcus kodakarensis (strain ATCC BAA-918 / JCM 12380 / KOD1) (Pyrococcus kodakaraensis (strain KOD1)).